Consider the following 293-residue polypeptide: D-alanine--D-alanine ligase (293 aa).

The ATP-grasp domain occupies 98 to 291 (KIIWKQHNLT…FNKLVVAIIN (194 aa)). An ATP-binding site is contributed by 124–177 (DFPLPWMVKPTLEGSSIGISKVDSQIQLNNALMLAWQYNSHALIEQWIEGDEYT). 3 residues coordinate Mg(2+): D245, E258, and N260.

Belongs to the D-alanine--D-alanine ligase family. It depends on Mg(2+) as a cofactor. Mn(2+) is required as a cofactor.

The protein localises to the cytoplasm. It catalyses the reaction 2 D-alanine + ATP = D-alanyl-D-alanine + ADP + phosphate + H(+). Its pathway is cell wall biogenesis; peptidoglycan biosynthesis. Cell wall formation. The chain is D-alanine--D-alanine ligase from Ruthia magnifica subsp. Calyptogena magnifica.